The sequence spans 165 residues: Large ribosomal subunit protein uL10 (165 aa).

Belongs to the universal ribosomal protein uL10 family. In terms of assembly, part of the ribosomal stalk of the 50S ribosomal subunit. The N-terminus interacts with L11 and the large rRNA to form the base of the stalk. The C-terminus forms an elongated spine to which L12 dimers bind in a sequential fashion forming a multimeric L10(L12)X complex.

In terms of biological role, forms part of the ribosomal stalk, playing a central role in the interaction of the ribosome with GTP-bound translation factors. The sequence is that of Large ribosomal subunit protein uL10 from Mycoplasma capricolum subsp. capricolum (strain California kid / ATCC 27343 / NCTC 10154).